Consider the following 729-residue polypeptide: MPTGFVAPILCVLLPSPTREAATVASATGDSASERESAAPAAAPTAEAPPPSVVTRPEPQALPSPAIRAPLPDLYPFGTMRGGGFGDRDRDRDRGGFGARGGGGLPPKKFGNPGERLRKKKWDLSELPKFEKNFYVEHPEVARLTPYEVDELRRKKEITVRGGDVCPKPVFAFHHANFPQYVMDVLMDQHFTEPTPIQCQGFPLALSGRDMVGIAQTGSGKTLAYLLPAIVHINHQPYLERGDGPICLVLAPTRELAQQVQQVADDYGKCSRLKSTCIYGGAPKGPQIRDLERGVEICIATPGRLIDFLESGKTNLRRCTYLVLDEADRMLDMGFEPQIRKIVDQIRPDRQTLMWSATWPKEVRQLAEDFLRDYTQINVGNLELSANHNILQIVDVCMESEKDHKLIQLMEEIMAEKENKTIIFVETKRRCDDLTRRMRRDGWPAMCIHGDKSQPERDWVLNEFRSGKAPILIATDVASRGLDVEDVKFVINYDYPNSSEDYVHRIGRTARSTNKGTAYTFFTPGNLKQARELIKVLEEANQAINPKLMQLVDHRGGGGGGGGRSRYRTTSSANNPNLMYQDECDRRLRGVKDGGRRDSASYRDRSETDRAGYANGSGYGSPNSAFGAQAGQYTYGQGTYGAAAYGTSSYTAQEYGAGTYGASSTTSTGRSSQSSSQQFSGIGRSGQQPQPLMSQQFAQPPGATNMIGYMGQTAYQYPPPPPPPPPSRK.

The segment at 20–115 (EAATVASATG…PPKKFGNPGE (96 aa)) is disordered. At S64 the chain carries Phosphoserine. Over residues 86-95 (GDRDRDRDRG) the composition is skewed to basic and acidic residues. Positions 96-105 (GFGARGGGGL) are enriched in gly residues. K108, K109, and K121 each carry N6-acetyllysine; by EP300. K129 participates in a covalent cross-link: Glycyl lysine isopeptide (Lys-Gly) (interchain with G-Cter in SUMO); alternate. K129 is covalently cross-linked (Glycyl lysine isopeptide (Lys-Gly) (interchain with G-Cter in SUMO1); alternate). K129 is covalently cross-linked (Glycyl lysine isopeptide (Lys-Gly) (interchain with G-Cter in SUMO2); alternate). Residues 171–199 (FAFHHANFPQYVMDVLMDQHFTEPTPIQC) carry the Q motif motif. Residues 202-377 (FPLALSGRDM…EDFLRDYTQI (176 aa)) form the Helicase ATP-binding domain. 215-222 (AQTGSGKT) contacts ATP. The DEAD box signature appears at 325-328 (DEAD). The Helicase C-terminal domain maps to 405-552 (KLIQLMEEIM…AINPKLMQLV (148 aa)). T523 carries the post-translational modification Phosphothreonine. A Glycyl lysine isopeptide (Lys-Gly) (interchain with G-Cter in SUMO2) cross-link involves residue K528. The interval 547–729 (KLMQLVDHRG…PPPPPPPSRK (183 aa)) is transactivation domain. 2 disordered regions span residues 551 to 623 (LVDH…GSPN) and 659 to 729 (TYGA…PSRK). The span at 568–578 (RTTSSANNPNL) shows a compositional bias: polar residues. Basic and acidic residues predominate over residues 583 to 610 (ECDRRLRGVKDGGRRDSASYRDRSETDR). Residues 659-688 (TYGASSTTSTGRSSQSSSQQFSGIGRSGQQ) are compositionally biased toward low complexity. R684 carries the post-translational modification Omega-N-methylarginine. Residues 689–698 (PQPLMSQQFA) are compositionally biased toward polar residues. Residues 717 to 729 (YPPPPPPPPPSRK) show a composition bias toward pro residues. The interval 718-726 (PPPPPPPPP) is interaction with YAP1.

This sequence belongs to the DEAD box helicase family. DDX5/DBP2 subfamily. Interacts with DDX5 in an RNA-independent manner. Interacts with CDK9 transcription elongation complex under basal conditions. Following cell stimulation with poly(I:C), a synthetic double-stranded RNA mimicking viral infection, the interaction with CDK9 is decreased. Interacts with ESR1 in an estrogen-independent manner. Interacts with HNRNPH1; this interaction is important for the regulation of alternative splicing on G-quadruplex structures. At high, but not low, cell density, interacts with DROSHA and DGCR8, the core components of the microprocessor complex involved in the maturation of primary microRNAs (pri-miRNAs) into pre-miRNAs. The interaction with DGCR8 is reduced during mitosis. At low, but not high, cell density, interacts with YAP1 and with its paralog, WWTR1/TAZ. Interactions with DROSHA and YAP1 are mutually exclusive. In vitro, the pre-miRNA processing activity of the DDX17-containing microprocessor complex is weaker than that of the DROSHA/DGCR8 microprocessor complex devoid of DDX17. Interacts with UPF3B. Interacts with NFAT5; this interaction leads to DDX17 recruitment to LNC2 and S100A4 promoters and NFAT5-mediated DDX17-enhanced transactivation. Interacts with HDAC1, HDAC2 and HDAC3; this interaction with HDAC1 and HDAC3, but not HDAC2, depends upon DDX17 acetylation. Interacts with ZC3HAV1 (via N-terminal domain) in an RNA-independent manner. Interacts with EXOSC3/RRP40 and EXOSC5/RRP46; this interaction may be indirect and mediated by ZC3HAV1-binding. Interacts with EP300; this interaction leads to acetylation at lysine residues. Interacts with CREBBP/CBP and KAT2B/P/CAF. Directly interacts with CTNNB1. Interacts with MYOD1. Interacts with TP53. Interacts with DCP1A in an RNA-independent manner. Interacts with DCP2 in an RNA-dependent manner. Interacts with DHX36; this interaction occurs in a RNA-dependent manner. Interacts with ERCC6. Post-translationally, sumoylation significantly increases stability. It also promotes interaction specifically with HDAC1 (but not HDAC2, nor HDAC3) and strongly stimulates ESR1 and TP53 coactivation. In terms of processing, acetylation at lysine residues stabilizes the protein, stimulates interaction with HDAC1 and HDAC3, but not HDAC2, and represses ESR1 and TP53 coactivation activity. In terms of tissue distribution, widely expressed. Low expression, if any, in normal colonic epithelial cells (at protein level). Levels tend to increase during colon cancer progression, from very low in benign hyperplastic polyps to very high in tubular and villous adenomas.

Its subcellular location is the nucleus. It is found in the nucleolus. It localises to the cytoplasm. The protein localises to the cytosol. It carries out the reaction ATP + H2O = ADP + phosphate + H(+). Functionally, as an RNA helicase, unwinds RNA and alters RNA structures through ATP binding and hydrolysis. Involved in multiple cellular processes, including pre-mRNA splicing, alternative splicing, ribosomal RNA processing and miRNA processing, as well as transcription regulation. Regulates the alternative splicing of exons exhibiting specific features. For instance, promotes the inclusion of AC-rich alternative exons in CD44 transcripts. This function requires the RNA helicase activity. Affects NFAT5 and histone macro-H2A.1/MACROH2A1 alternative splicing in a CDK9-dependent manner. In NFAT5, promotes the introduction of alternative exon 4, which contains 2 stop codons and may target NFAT5 exon 4-containing transcripts to nonsense-mediated mRNA decay, leading to the down-regulation of NFAT5 protein. Affects splicing of mediators of steroid hormone signaling pathway, including kinases that phosphorylates ESR1, such as CDK2, MAPK1 and GSK3B, and transcriptional regulators, such as CREBBP, MED1, NCOR1 and NCOR2. By affecting GSK3B splicing, participates in ESR1 and AR stabilization. In myoblasts and epithelial cells, cooperates with HNRNPH1 to control the splicing of specific subsets of exons. In addition to binding mature mRNAs, also interacts with certain pri-microRNAs, including MIR663/miR-663a, MIR99B/miR-99b, and MIR6087/miR-6087. Binds pri-microRNAs on the 3' segment flanking the stem loop via the 5'-[ACG]CAUC[ACU]-3' consensus sequence. Required for the production of subsets of microRNAs, including MIR21 and MIR125B1. May be involved not only in microRNA primary transcript processing, but also stabilization. Participates in MYC down-regulation at high cell density through the production of MYC-targeting microRNAs. Along with DDX5, may be involved in the processing of the 32S intermediate into the mature 28S ribosomal RNA. Promoter-specific transcription regulator, functioning as a coactivator or corepressor depending on the context of the promoter and the transcriptional complex in which it exists. Enhances NFAT5 transcriptional activity. Synergizes with TP53 in the activation of the MDM2 promoter; this activity requires acetylation on lysine residues. May also coactivate MDM2 transcription through a TP53-independent pathway. Coactivates MMP7 transcription. Along with CTNNB1, coactivates MYC, JUN, FOSL1 and cyclin D1/CCND1 transcription. Alone or in combination with DDX5 and/or SRA1 non-coding RNA, plays a critical role in promoting the assembly of proteins required for the formation of the transcription initiation complex and chromatin remodeling leading to coactivation of MYOD1-dependent transcription. This helicase-independent activity is required for skeletal muscle cells to properly differentiate into myotubes. During epithelial-to-mesenchymal transition, coregulates SMAD-dependent transcriptional activity, directly controlling key effectors of differentiation, including miRNAs which in turn directly repress its expression. Plays a role in estrogen and testosterone signaling pathway at several levels. Mediates the use of alternative promoters in estrogen-responsive genes and regulates transcription and splicing of a large number of steroid hormone target genes. Contrary to splicing regulation activity, transcriptional coregulation of the estrogen receptor ESR1 is helicase-independent. Plays a role in innate immunity. Specifically restricts bunyavirus infection, including Rift Valley fever virus (RVFV) or La Crosse virus (LACV), but not vesicular stomatitis virus (VSV), in an interferon- and DROSHA-independent manner. Binds to RVFV RNA, likely via structured viral RNA elements. Promotes mRNA degradation mediated by the antiviral zinc-finger protein ZC3HAV1, in an ATPase-dependent manner. This Homo sapiens (Human) protein is Probable ATP-dependent RNA helicase DDX17 (DDX17).